We begin with the raw amino-acid sequence, 500 residues long: Trans-cinnamate 4-monooxygenase (500 aa).

A helical membrane pass occupies residues 3–23; sequence ALLVEKVLLGLFVAAVLALVV. (E)-cinnamate contacts are provided by residues 213–218 and A302; that span reads RSRLSQ. C442 lines the heme pocket.

Belongs to the cytochrome P450 family. Heme serves as cofactor. Expressed in roots and leaves.

Its subcellular location is the membrane. It carries out the reaction (E)-cinnamate + reduced [NADPH--hemoprotein reductase] + O2 = (E)-4-coumarate + oxidized [NADPH--hemoprotein reductase] + H2O + H(+). It functions in the pathway phenylpropanoid metabolism; trans-4-coumarate biosynthesis; trans-4-coumarate from trans-cinnamate: step 1/1. Its function is as follows. Catalyzes the first oxidative step of the phenylpropanoid pathway in higher plants by transforming trans-cinnamate into p-coumarate. The compounds formed by this pathway are essential components for lignification, pollination, and defense against ultraviolet light, predators and pathogens. This Oryza sativa subsp. japonica (Rice) protein is Trans-cinnamate 4-monooxygenase.